The chain runs to 201 residues: Recombination protein RecR (201 aa).

The segment at C57–C74 adopts a C4-type zinc-finger fold. Positions S82 to A178 constitute a Toprim domain.

Belongs to the RecR family.

Its function is as follows. May play a role in DNA repair. It seems to be involved in an RecBC-independent recombinational process of DNA repair. It may act with RecF and RecO. This Leuconostoc mesenteroides subsp. mesenteroides (strain ATCC 8293 / DSM 20343 / BCRC 11652 / CCM 1803 / JCM 6124 / NCDO 523 / NBRC 100496 / NCIMB 8023 / NCTC 12954 / NRRL B-1118 / 37Y) protein is Recombination protein RecR.